Reading from the N-terminus, the 505-residue chain is Maturase K (505 aa).

It belongs to the intron maturase 2 family. MatK subfamily.

Its subcellular location is the plastid. It localises to the chloroplast. Its function is as follows. Usually encoded in the trnK tRNA gene intron. Probably assists in splicing its own and other chloroplast group II introns. This is Maturase K from Cubanola domingensis.